The following is a 636-amino-acid chain: MNPSAPSYPMASLYVGDLHPDATEAMLYEKFSPAGPILSIRVCRDMITRRSLGYAYVNFQQPADAERALDTMNFDVIKGKPVRIMWSQRDPSLRKSGVGNIFIKNLDKSIDNKALYDTFSAFGNILSCKVVCDENGSKGYGFVHFETQEAAERAIEKMNGMLLNDRKVFVGRFKSRKEREAELGARAKEFTNVYIKNFGEDMDDERLKDLFGKFGPALSVKVMTDESGKSKGFGFVSFERHEDAQKAVDEMNGKELNGKQIYVGRAQKKVERQTELKRKFEQMKQDRITRYQGVNLYVKNLDDGIDDERLRKEFSPFGTITSAKVMMEGGRSKGFGFVCFSSPEEATKAVTEMNGRIVATKPLYVALAQRKEERQAHLTNQYMQRMASVRAVPNPVINPYQPAPPSGYFMAAIPQTQNRAAYYPPSQIAQLRPSPRWTAQGARPHPFQNMPGAIRPAAPRPPFSTMRPASSQVPRVMSTQRVANTSTQTMGPRPAAAAAAATPAVRTVPQYKYAAGVRNPQQHLNAQPQVTMQQPAVHVQGQEPLTASMLASAPPQEQKQMLGERLFPLIQAMHPTLAGKITGMLLEIDNSELLHMLESPESLRSKVDEAVAVLQAHQAKEAAQKAVNSATGVPTV.

Residue Met1 is modified to N-acetylmethionine. 4 consecutive RRM domains span residues 11-89 (ASLY…WSQR), 99-175 (GNIF…RFKS), 191-268 (TNVY…RAQK), and 294-370 (VNLY…LAQR). Positions 166–289 (RKVFVGRFKS…FEQMKQDRIT (124 aa)) are CSDE1-binding. At Lys299 the chain carries N6-methyllysine. Ser315 carries the post-translational modification Phosphoserine. Thr319 carries the phosphothreonine modification. Arg385, Arg419, Arg432, and Arg436 each carry omega-N-methylarginine. An omega-N-methylated arginine; by CARM1 mark is found at Arg455 and Arg460. An omega-N-methylarginine mark is found at Arg475 and Arg481. Arg493 carries the post-translational modification Asymmetric dimethylarginine; alternate. Arg493 is modified (dimethylated arginine; alternate). Arg493 is modified (omega-N-methylarginine; alternate). Arg506 is modified (omega-N-methylarginine). Residue Lys512 is modified to N6-acetyllysine. Omega-N-methylarginine is present on Arg518. The PABC domain occupies 542–619 (QEPLTASMLA…AVAVLQAHQA (78 aa)).

This sequence belongs to the polyadenylate-binding protein type-1 family. May form homodimers. Component of a multisubunit autoregulatory ribonucleoprotein complex (ARC), at least composed of IGF2BP1, PABPC1 and CSDE1. Directly interacts with IGF2BP1. Part of a complex associated with the FOS mCRD domain and consisting of HNRPD, SYNCRIP, PAIP1 and CSDE1/UNR. Interacts with PAIP1 and PAIP2 (via the PABPC1-interacting motifs PAM1 and PAM2). Interacts with PAIP1 with a 1:1 stoichiometry and with PAIP2 with a 1:2 stoichiometry. The interaction with CSDE1 is direct and RNA-independent. Found in a mRNP complex with YBX2. Interacts with TENT2/GLD2. Identified in the spliceosome C complex. Identified in a mRNP complex, at least composed of DHX9, DDX3X, ELAVL1, HNRNPU, IGF2BP1, ILF3, PABPC1, PCBP2, PTBP2, STAU1, STAU2, SYNCRIP and YBX1. The interaction with DDX3X is direct and RNA-independent. This interaction increases in stressed cells and decreases during cell recovery. Identified in a IGF2BP1-dependent mRNP granule complex containing untranslated mRNAs. Interacts with NXF1/TAP. Interacts with PIWIL1. Interacts with AGO1, AGO2, GSPT1 and GSPT2. Interacts with LARP4B. Interacts (via the second and third RRM domains and the C-terminus) with PAIP2B (via central acidic portion and C-terminus). Forms a complex with LARP1 and SHFL. Interacts with LARP4. Interacts with ZFC3H1 in a RNase-sensitive manner. Interacts with TRIM71 (via NHL repeats) in an RNA-dependent manner. Interacts with TENT5C; the interaction has no effect on TENT5C poly(A) polymerase function. Interacts with G3BP1 and G3BP2. Interacts with ENDOV; the interaction is RNA-dependent and stimulates ENDOV activity. Interacts with UPF1; the interaction is RNA-dependent. Interacts with IGF2BP2 and IGF2BP3. May interact with SETX. Interacts with RBM46. Interacts with PAN3. Post-translationally, phosphorylated by MAPKAPK2. In terms of processing, methylated by CARM1. Arg-493 is dimethylated, probably to asymmetric dimethylarginine.

The protein resides in the cytoplasm. It localises to the stress granule. The protein localises to the nucleus. Its subcellular location is the cell projection. It is found in the lamellipodium. Binds the poly(A) tail of mRNA, including that of its own transcript, and regulates processes of mRNA metabolism such as pre-mRNA splicing and mRNA stability. Its function in translational initiation regulation can either be enhanced by PAIP1 or repressed by PAIP2. Can probably bind to cytoplasmic RNA sequences other than poly(A) in vivo. Binds to N6-methyladenosine (m6A)-containing mRNAs and contributes to MYC stability by binding to m6A-containing MYC mRNAs. Involved in translationally coupled mRNA turnover. Implicated with other RNA-binding proteins in the cytoplasmic deadenylation/translational and decay interplay of the FOS mRNA mediated by the major coding-region determinant of instability (mCRD) domain. Involved in regulation of nonsense-mediated decay (NMD) of mRNAs containing premature stop codons; for the recognition of premature termination codons (PTC) and initiation of NMD a competitive interaction between UPF1 and PABPC1 with the ribosome-bound release factors is proposed. By binding to long poly(A) tails, may protect them from uridylation by ZCCHC6/ZCCHC11 and hence contribute to mRNA stability. The sequence is that of Polyadenylate-binding protein 1 (PABPC1) from Pongo abelii (Sumatran orangutan).